Reading from the N-terminus, the 112-residue chain is UPF0060 membrane protein SAV_4756 (112 aa).

4 helical membrane-spanning segments follow: residues 8–28 (ALFV…WQGV), 33–53 (GWLW…VATL), 62–82 (ILAA…MVAD), and 91–111 (VTGA…PRGG).

This sequence belongs to the UPF0060 family.

Its subcellular location is the cell membrane. This is UPF0060 membrane protein SAV_4756 from Streptomyces avermitilis (strain ATCC 31267 / DSM 46492 / JCM 5070 / NBRC 14893 / NCIMB 12804 / NRRL 8165 / MA-4680).